The primary structure comprises 365 residues: DNA replication and repair protein RecF (365 aa).

ATP is bound at residue 30–37 (GDNGEGKT).

It belongs to the RecF family.

The protein localises to the cytoplasm. Its function is as follows. The RecF protein is involved in DNA metabolism; it is required for DNA replication and normal SOS inducibility. RecF binds preferentially to single-stranded, linear DNA. It also seems to bind ATP. In Leptospira interrogans serogroup Icterohaemorrhagiae serovar Lai (strain 56601), this protein is DNA replication and repair protein RecF.